We begin with the raw amino-acid sequence, 123 residues long: uncharacterized protein (123 aa).

Residues 5–25 (GTLVILFAIILILCIMLLFYY) form a helical membrane-spanning segment.

The protein belongs to the asfivirus CP123L family.

The protein resides in the host membrane. Its subcellular location is the virion. This is an uncharacterized protein from Ornithodoros (relapsing fever ticks).